Here is a 575-residue protein sequence, read N- to C-terminus: Proline--tRNA ligase (575 aa).

Belongs to the class-II aminoacyl-tRNA synthetase family. ProS type 1 subfamily. As to quaternary structure, homodimer.

The protein resides in the cytoplasm. It carries out the reaction tRNA(Pro) + L-proline + ATP = L-prolyl-tRNA(Pro) + AMP + diphosphate. In terms of biological role, catalyzes the attachment of proline to tRNA(Pro) in a two-step reaction: proline is first activated by ATP to form Pro-AMP and then transferred to the acceptor end of tRNA(Pro). As ProRS can inadvertently accommodate and process non-cognate amino acids such as alanine and cysteine, to avoid such errors it has two additional distinct editing activities against alanine. One activity is designated as 'pretransfer' editing and involves the tRNA(Pro)-independent hydrolysis of activated Ala-AMP. The other activity is designated 'posttransfer' editing and involves deacylation of mischarged Ala-tRNA(Pro). The misacylated Cys-tRNA(Pro) is not edited by ProRS. The protein is Proline--tRNA ligase of Heliobacterium modesticaldum (strain ATCC 51547 / Ice1).